A 321-amino-acid chain; its full sequence is Fructose-1,6-bisphosphatase class 1 (321 aa).

Residues Glu93, Asp114, Leu116, and Asp117 each coordinate Mg(2+). Substrate contacts are provided by residues Asp117–Ser120, Asn205, Tyr233, and Lys263. Residue Glu269 participates in Mg(2+) binding.

Belongs to the FBPase class 1 family. In terms of assembly, homotetramer. The cofactor is Mg(2+).

It is found in the cytoplasm. It carries out the reaction beta-D-fructose 1,6-bisphosphate + H2O = beta-D-fructose 6-phosphate + phosphate. It participates in carbohydrate biosynthesis; gluconeogenesis. This is Fructose-1,6-bisphosphatase class 1 from Persephonella marina (strain DSM 14350 / EX-H1).